The chain runs to 185 residues: Pap fimbrial major pilin protein (185 aa).

The N-terminal stretch at 1–22 (MIKSVIAGAVAMAVVSFGVNNA) is a signal peptide. The cysteines at positions 44 and 83 are disulfide-linked.

It belongs to the fimbrial protein family.

Its subcellular location is the secreted. The protein localises to the fimbrium. Its function is as follows. Polymerizes to form the thick (6.8 nm in diameter) rod of the pilus (also called fimbria). The rod is a right-handed helical cylinder with 3.28 PapA subunits per turn. Pili are polar filaments radiating from the surface of the bacterium to a length of 0.5-1.5 micrometers and numbering 100-300 per cell, and enable bacteria to colonize the epithelium of specific host organs. The protein is Pap fimbrial major pilin protein (papA) of Escherichia coli.